A 121-amino-acid polypeptide reads, in one-letter code: MANPKQVFRRNTEWWNHVERSLVTDLLIHGEIKTTLERAKRIKSKAEKMITLGKLNTLASRRQALKYLRLIPSKVANKDSVQYLFDTIAPKYKNRAGGYTRIIKIQNRAGDNAKMALIQLV.

It belongs to the bacterial ribosomal protein bL17 family. Part of the 50S ribosomal subunit. Contacts protein L32.

This Metamycoplasma arthritidis (strain 158L3-1) (Mycoplasma arthritidis) protein is Large ribosomal subunit protein bL17.